The sequence spans 287 residues: 4-diphosphocytidyl-2-C-methyl-D-erythritol kinase (287 aa).

The active site involves K12. 94–104 (PAQAGMGGGSS) is a binding site for ATP. D136 is an active-site residue.

This sequence belongs to the GHMP kinase family. IspE subfamily.

It carries out the reaction 4-CDP-2-C-methyl-D-erythritol + ATP = 4-CDP-2-C-methyl-D-erythritol 2-phosphate + ADP + H(+). The protein operates within isoprenoid biosynthesis; isopentenyl diphosphate biosynthesis via DXP pathway; isopentenyl diphosphate from 1-deoxy-D-xylulose 5-phosphate: step 3/6. Functionally, catalyzes the phosphorylation of the position 2 hydroxy group of 4-diphosphocytidyl-2C-methyl-D-erythritol. This Albidiferax ferrireducens (strain ATCC BAA-621 / DSM 15236 / T118) (Rhodoferax ferrireducens) protein is 4-diphosphocytidyl-2-C-methyl-D-erythritol kinase.